A 545-amino-acid chain; its full sequence is Chaperonin GroEL (545 aa).

Residues 30-33, Lys51, 87-91, Gly415, 479-481, and Asp495 contribute to the ATP site; these read TLGP, DGTTT, and NAA. Positions 526–545 are disordered; it reads KEDKPDLGNAGAGGNMGGMM. The segment covering 535-545 has biased composition (gly residues); that stretch reads AGAGGNMGGMM.

It belongs to the chaperonin (HSP60) family. As to quaternary structure, forms a cylinder of 14 subunits composed of two heptameric rings stacked back-to-back. Interacts with the co-chaperonin GroES.

Its subcellular location is the cytoplasm. The enzyme catalyses ATP + H2O + a folded polypeptide = ADP + phosphate + an unfolded polypeptide.. Functionally, together with its co-chaperonin GroES, plays an essential role in assisting protein folding. The GroEL-GroES system forms a nano-cage that allows encapsulation of the non-native substrate proteins and provides a physical environment optimized to promote and accelerate protein folding. This Blochmanniella pennsylvanica (strain BPEN) protein is Chaperonin GroEL.